The following is a 185-amino-acid chain: Ribosome-recycling factor (185 aa).

This sequence belongs to the RRF family.

The protein localises to the cytoplasm. Functionally, responsible for the release of ribosomes from messenger RNA at the termination of protein biosynthesis. May increase the efficiency of translation by recycling ribosomes from one round of translation to another. This Chromohalobacter salexigens (strain ATCC BAA-138 / DSM 3043 / CIP 106854 / NCIMB 13768 / 1H11) protein is Ribosome-recycling factor.